The following is a 702-amino-acid chain: Ribosomal RNA large subunit methyltransferase K/L (702 aa).

One can recognise a THUMP domain in the interval 43–154; the sequence is LVYQSLMWSR…KETASIALDL (112 aa).

The protein belongs to the methyltransferase superfamily. RlmKL family.

The protein resides in the cytoplasm. The catalysed reaction is guanosine(2445) in 23S rRNA + S-adenosyl-L-methionine = N(2)-methylguanosine(2445) in 23S rRNA + S-adenosyl-L-homocysteine + H(+). The enzyme catalyses guanosine(2069) in 23S rRNA + S-adenosyl-L-methionine = N(2)-methylguanosine(2069) in 23S rRNA + S-adenosyl-L-homocysteine + H(+). Its function is as follows. Specifically methylates the guanine in position 2445 (m2G2445) and the guanine in position 2069 (m7G2069) of 23S rRNA. This is Ribosomal RNA large subunit methyltransferase K/L from Shigella flexneri serotype 5b (strain 8401).